Here is a 311-residue protein sequence, read N- to C-terminus: 4-diphosphocytidyl-2-C-methyl-D-erythritol kinase (311 aa).

The active site involves lysine 13. 114–124 (PVAGGMAGGSA) is a binding site for ATP. Aspartate 156 is an active-site residue.

Belongs to the GHMP kinase family. IspE subfamily.

It catalyses the reaction 4-CDP-2-C-methyl-D-erythritol + ATP = 4-CDP-2-C-methyl-D-erythritol 2-phosphate + ADP + H(+). It participates in isoprenoid biosynthesis; isopentenyl diphosphate biosynthesis via DXP pathway; isopentenyl diphosphate from 1-deoxy-D-xylulose 5-phosphate: step 3/6. Functionally, catalyzes the phosphorylation of the position 2 hydroxy group of 4-diphosphocytidyl-2C-methyl-D-erythritol. The protein is 4-diphosphocytidyl-2-C-methyl-D-erythritol kinase of Corynebacterium diphtheriae (strain ATCC 700971 / NCTC 13129 / Biotype gravis).